Consider the following 485-residue polypeptide: Sulfate adenylyltransferase subunit 1 (485 aa).

Positions 17–232 (KDLLRLLTAG…LETVHIDNDH (216 aa)) constitute a tr-type G domain. Positions 26–33 (GSVDDGKS) are G1. 26–33 (GSVDDGKS) lines the GTP pocket. The G2 stretch occupies residues 84 to 88 (GITID). Residues 105–108 (DTPG) are G3. Residues 105–109 (DTPGH) and 160–163 (NKMD) contribute to the GTP site. Positions 160–163 (NKMD) are G4. A G5 region spans residues 197-199 (SAL).

This sequence belongs to the TRAFAC class translation factor GTPase superfamily. Classic translation factor GTPase family. CysN/NodQ subfamily. In terms of assembly, heterodimer composed of CysD, the smaller subunit, and CysN.

It carries out the reaction sulfate + ATP + H(+) = adenosine 5'-phosphosulfate + diphosphate. The protein operates within sulfur metabolism; hydrogen sulfide biosynthesis; sulfite from sulfate: step 1/3. Functionally, with CysD forms the ATP sulfurylase (ATPS) that catalyzes the adenylation of sulfate producing adenosine 5'-phosphosulfate (APS) and diphosphate, the first enzymatic step in sulfur assimilation pathway. APS synthesis involves the formation of a high-energy phosphoric-sulfuric acid anhydride bond driven by GTP hydrolysis by CysN coupled to ATP hydrolysis by CysD. The sequence is that of Sulfate adenylyltransferase subunit 1 from Bacteroides thetaiotaomicron (strain ATCC 29148 / DSM 2079 / JCM 5827 / CCUG 10774 / NCTC 10582 / VPI-5482 / E50).